Reading from the N-terminus, the 476-residue chain is Serine/threonine-protein kinase Chk1 (476 aa).

The interval 1 to 265 (MAVPFVEDWD…IPDIKKDRWY (265 aa)) is interaction with CLSPN. The region spanning 9 to 265 (WDLVQTLGEG…IPDIKKDRWY (257 aa)) is the Protein kinase domain. ATP-binding positions include 15–23 (LGEGAYGEV) and lysine 38. Catalysis depends on aspartate 130, which acts as the Proton acceptor. Lysine 132 is covalently cross-linked (Glycyl lysine isopeptide (Lys-Gly) (interchain with G-Cter in ubiquitin)). The tract at residues 267–329 (KPLNRGAKRP…EPRTGLSLWD (63 aa)) is disordered. A Phosphoserine; by PKB/AKT1 modification is found at serine 280. A compositionally biased stretch (low complexity) spans 280–291 (SGGMSESSSGFS). 3 positions are modified to phosphoserine: serine 286, serine 296, and serine 301. The segment covering 298-320 (LDFSPINSGSSEENVKFSSSQPE) has biased composition (polar residues). 2 positions are modified to phosphoserine; by ATM and ATR: serine 317 and serine 345. Positions 391–476 (QCLKETFEKL…SSQKVWFPVT (86 aa)) are autoinhibitory region. A Glycyl lysine isopeptide (Lys-Gly) (interchain with G-Cter in ubiquitin) cross-link involves residue lysine 436. Phosphoserine occurs at positions 463, 467, and 468.

It belongs to the protein kinase superfamily. CAMK Ser/Thr protein kinase family. NIM1 subfamily. Interacts (phosphorylated by ATR) with RAD51. Interacts with and phosphorylates CLSPN, an adapter protein that regulates the ATR-dependent phosphorylation of CHEK1. Interacts with BRCA1. Interacts with and phosphorylates CDC25A, CDC25B and CDC25C. Interacts with FBXO6, which regulates CHEK1. Interacts with PPM1D, which regulates CHEK1 through dephosphorylation. Interacts with TIMELESS; DNA damage-dependent. Interacts with FEM1B; activates CHEK1 in response to stress. Interacts with TLK1. Interacts with XPO1 and YWHAZ. Interacts with CDK5RAP3; antagonizes CHEK1. Phosphorylated by ATR in a RAD17-dependent manner in response to ultraviolet irradiation and inhibition of DNA replication. Phosphorylated by ATM in response to ionizing irradiation. ATM and ATR can both phosphorylate Ser-317 and Ser-345 and this results in enhanced kinase activity. Phosphorylation at Ser-345 induces a change in the conformation of the protein, activates the kinase activity and is a prerequisite for interaction with FBXO6 and subsequent ubiquitination at Lys-436. Phosphorylation at Ser-345 also increases binding to 14-3-3 proteins and promotes nuclear retention. Conversely, dephosphorylation at Ser-345 by PPM1D may contribute to exit from checkpoint mediated cell cycle arrest. Phosphorylation at Ser-280 by AKT1/PKB, may promote mono and/or diubiquitination. Also phosphorylated at undefined residues during mitotic arrest, resulting in decreased activity. In terms of processing, ubiquitinated. Mono or diubiquitination promotes nuclear exclusion. The activated form (phosphorylated on Ser-345) is polyubiquitinated at Lys-436 by some SCF-type E3 ubiquitin ligase complex containing FBXO6 promoting its degradation. Ubiquitination and degradation are required to terminate the checkpoint and ensure that activated CHEK1 does not accumulate as cells progress through S phase, when replication forks encounter transient impediments during normal DNA replication. 'Lys-63'-mediated ubiquitination by TRAF4 at Lys-132 activates cell cycle arrest and activation of DNA repair. Post-translationally, proteolytically cleaved at the C-terminus by SPRTN during normal DNA replication, thereby promoting CHEK1 removal from chromatin and activating the protein kinase activity. As to expression, expressed in brain, heart, liver, lung, skeletal muscle, spleen and testis. In terms of tissue distribution, expressed only in liver.

It localises to the nucleus. It is found in the chromosome. Its subcellular location is the cytoplasm. The protein resides in the cytoskeleton. The protein localises to the microtubule organizing center. It localises to the centrosome. The catalysed reaction is L-seryl-[protein] + ATP = O-phospho-L-seryl-[protein] + ADP + H(+). The enzyme catalyses L-threonyl-[protein] + ATP = O-phospho-L-threonyl-[protein] + ADP + H(+). Activated through phosphorylation predominantly by ATR but also by ATM in response to DNA damage or inhibition of DNA replication. Activation is modulated by several mediators including CLSPN, BRCA1 and FEM1B. Proteolytic cleavage at the C-terminus by SPRTN during normal DNA replication activates the protein kinase activity. Serine/threonine-protein kinase which is required for checkpoint-mediated cell cycle arrest and activation of DNA repair in response to the presence of DNA damage or unreplicated DNA. May also negatively regulate cell cycle progression during unperturbed cell cycles. This regulation is achieved by a number of mechanisms that together help to preserve the integrity of the genome. Recognizes the substrate consensus sequence [R-X-X-S/T]. Binds to and phosphorylates CDC25A, CDC25B and CDC25C. Phosphorylation of CDC25A at 'Ser-178' and 'Thr-507' and phosphorylation of CDC25C at 'Ser-216' creates binding sites for 14-3-3 proteins which inhibit CDC25A and CDC25C. Phosphorylation of CDC25A at 'Ser-76', 'Ser-124', 'Ser-178', 'Ser-279' and 'Ser-293' promotes proteolysis of CDC25A. Phosphorylation of CDC25A at 'Ser-76' primes the protein for subsequent phosphorylation at 'Ser-79', 'Ser-82' and 'Ser-88' by NEK11, which is required for polyubiquitination and degradation of CDCD25A. Inhibition of CDC25 leads to increased inhibitory tyrosine phosphorylation of CDK-cyclin complexes and blocks cell cycle progression. Also phosphorylates NEK6. Binds to and phosphorylates RAD51 at 'Thr-309', which promotes the release of RAD51 from BRCA2 and enhances the association of RAD51 with chromatin, thereby promoting DNA repair by homologous recombination. Phosphorylates multiple sites within the C-terminus of TP53, which promotes activation of TP53 by acetylation and promotes cell cycle arrest and suppression of cellular proliferation. Also promotes repair of DNA cross-links through phosphorylation of FANCE. Binds to and phosphorylates TLK1 at 'Ser-743', which prevents the TLK1-dependent phosphorylation of the chromatin assembly factor ASF1A. This may enhance chromatin assembly both in the presence or absence of DNA damage. May also play a role in replication fork maintenance through regulation of PCNA. May regulate the transcription of genes that regulate cell-cycle progression through the phosphorylation of histones. Phosphorylates histone H3.1 (to form H3T11ph), which leads to epigenetic inhibition of a subset of genes. May also phosphorylate RB1 to promote its interaction with the E2F family of transcription factors and subsequent cell cycle arrest. Phosphorylates SPRTN, promoting SPRTN recruitment to chromatin. Reduces replication stress and activates the G2/M checkpoint, by phosphorylating and inactivating PABIR1/FAM122A and promoting the serine/threonine-protein phosphatase 2A-mediated dephosphorylation and stabilization of WEE1 levels and activity. This Rattus norvegicus (Rat) protein is Serine/threonine-protein kinase Chk1 (Chek1).